A 95-amino-acid chain; its full sequence is Ribonuclease kappa (95 aa).

The next 2 membrane-spanning stretches (helical) occupy residues 12–32 and 68–88; these read GLII…FFYI and CWIA…QFYM.

This sequence belongs to the RNase K family.

It localises to the membrane. Functionally, endoribonuclease. (Microbial infection) Required for the initial stages of clathrin-mediated endocytic uptake of a diverse set of flaviviruses, including dengue and West Nile. Not required for clathrin-mediated endocytosis and macropinocytosis. The sequence is that of Ribonuclease kappa from Drosophila melanogaster (Fruit fly).